The following is a 614-amino-acid chain: Sulfite reductase [NADPH] flavoprotein alpha-component (614 aa).

A Flavodoxin-like domain is found at 79–217 (LTIIFASQTG…AATEWRKQVL (139 aa)). FMN contacts are provided by residues 85–90 (SQTGNA), 132–135 (STNG), and 168–177 (LGDSSYQFFC). An FAD-binding FR-type domain is found at 249-463 (EQPYTASLST…VEHNNNFKLP (215 aa)). Residues T337, T371, 401-404 (RLYS), 419-421 (TVG), Y425, and 434-437 (GGAS) contribute to the FAD site. Residues 534–535 (SR), 540–544 (KVYVQ), and D576 contribute to the NADP(+) site. Y614 contacts FAD.

The protein belongs to the NADPH-dependent sulphite reductase flavoprotein subunit CysJ family. This sequence in the N-terminal section; belongs to the flavodoxin family. In the C-terminal section; belongs to the flavoprotein pyridine nucleotide cytochrome reductase family. As to quaternary structure, alpha(8)-beta(8). The alpha component is a flavoprotein, the beta component is a hemoprotein. FAD serves as cofactor. It depends on FMN as a cofactor.

The enzyme catalyses hydrogen sulfide + 3 NADP(+) + 3 H2O = sulfite + 3 NADPH + 4 H(+). Its pathway is sulfur metabolism; hydrogen sulfide biosynthesis; hydrogen sulfide from sulfite (NADPH route): step 1/1. Functionally, component of the sulfite reductase complex that catalyzes the 6-electron reduction of sulfite to sulfide. This is one of several activities required for the biosynthesis of L-cysteine from sulfate. The flavoprotein component catalyzes the electron flow from NADPH -&gt; FAD -&gt; FMN to the hemoprotein component. The protein is Sulfite reductase [NADPH] flavoprotein alpha-component of Vibrio cholerae serotype O1 (strain ATCC 39541 / Classical Ogawa 395 / O395).